The primary structure comprises 568 residues: Glucose-6-phosphate isomerase, cytosolic 1 (568 aa).

Glu-360 (proton donor) is an active-site residue. Active-site residues include His-391 and Lys-516.

This sequence belongs to the GPI family. Homodimer.

It localises to the cytoplasm. It carries out the reaction alpha-D-glucose 6-phosphate = beta-D-fructose 6-phosphate. It participates in carbohydrate degradation; glycolysis; D-glyceraldehyde 3-phosphate and glycerone phosphate from D-glucose: step 2/4. In Clarkia mildrediae, this protein is Glucose-6-phosphate isomerase, cytosolic 1 (PGIC1).